Here is a 318-residue protein sequence, read N- to C-terminus: CRISPR-associated endonuclease Cas1 1 (318 aa).

E157, H222, and E237 together coordinate Mn(2+).

The protein belongs to the CRISPR-associated endonuclease Cas1 family. Homodimer, forms a heterotetramer with a Cas2 homodimer. Mg(2+) serves as cofactor. Mn(2+) is required as a cofactor.

Functionally, CRISPR (clustered regularly interspaced short palindromic repeat), is an adaptive immune system that provides protection against mobile genetic elements (viruses, transposable elements and conjugative plasmids). CRISPR clusters contain spacers, sequences complementary to antecedent mobile elements, and target invading nucleic acids. CRISPR clusters are transcribed and processed into CRISPR RNA (crRNA). Acts as a dsDNA endonuclease. Involved in the integration of spacer DNA into the CRISPR cassette. The protein is CRISPR-associated endonuclease Cas1 1 of Francisella tularensis subsp. novicida (strain U112).